The following is a 512-amino-acid chain: Apolipoprotein N-acyltransferase (512 aa).

6 consecutive transmembrane segments (helical) span residues 5-25, 56-76, 92-112, 118-138, 168-188, and 195-215; these read LDKY…FAAA, FAVS…FYWI, VPLT…CFWL, LPRG…TEFA, LGGI…LVLA, and SGKR…GYTA. In terms of domain architecture, CN hydrolase spans 233–477; that stretch reads LQGNIDQTLK…ETVLEGHIKG (245 aa). Glu271 serves as the catalytic Proton acceptor. Lys337 is an active-site residue. The active-site Nucleophile is Cys389. A helical membrane pass occupies residues 487 to 507; the sequence is TGSSWWLMGILALAALILFIF.

It belongs to the CN hydrolase family. Apolipoprotein N-acyltransferase subfamily.

It localises to the cell inner membrane. It catalyses the reaction N-terminal S-1,2-diacyl-sn-glyceryl-L-cysteinyl-[lipoprotein] + a glycerophospholipid = N-acyl-S-1,2-diacyl-sn-glyceryl-L-cysteinyl-[lipoprotein] + a 2-acyl-sn-glycero-3-phospholipid + H(+). The protein operates within protein modification; lipoprotein biosynthesis (N-acyl transfer). Its function is as follows. Catalyzes the phospholipid dependent N-acylation of the N-terminal cysteine of apolipoprotein, the last step in lipoprotein maturation. This chain is Apolipoprotein N-acyltransferase, found in Neisseria meningitidis serogroup B (strain ATCC BAA-335 / MC58).